Here is a 476-residue protein sequence, read N- to C-terminus: Inosine-5'-monophosphate dehydrogenase (476 aa).

CBS domains lie at 92 to 150 and 151 to 207; these read MIEN…IADV and MTKD…PNAS. NAD(+) is bound by residues D244 and 294 to 296; that span reads GVG. G296 and G298 together coordinate K(+). S299 lines the IMP pocket. C301 contributes to the K(+) binding site. C301 (thioimidate intermediate) is an active-site residue. IMP contacts are provided by residues 334 to 336, 357 to 358, 381 to 385, and E413; these read DGG, GS, and YRGMA. E467 and S468 together coordinate K(+).

Belongs to the IMPDH/GMPR family. In terms of assembly, homotetramer. K(+) serves as cofactor.

It carries out the reaction IMP + NAD(+) + H2O = XMP + NADH + H(+). Its pathway is purine metabolism; XMP biosynthesis via de novo pathway; XMP from IMP: step 1/1. Its activity is regulated as follows. Mycophenolic acid (MPA) is a non-competitive inhibitor that prevents formation of the closed enzyme conformation by binding to the same site as the amobile flap. In contrast, mizoribine monophosphate (MZP) is a competitive inhibitor that induces the closed conformation. MPA is a potent inhibitor of mammalian IMPDHs but a poor inhibitor of the bacterial enzymes. MZP is a more potent inhibitor of bacterial IMPDH. Its function is as follows. Catalyzes the conversion of inosine 5'-phosphate (IMP) to xanthosine 5'-phosphate (XMP), the first committed and rate-limiting step in the de novo synthesis of guanine nucleotides, and therefore plays an important role in the regulation of cell growth. The protein is Inosine-5'-monophosphate dehydrogenase of Nitrosopumilus maritimus (strain SCM1).